We begin with the raw amino-acid sequence, 146 residues long: Phospholipase A2 PS22 (146 aa).

An N-terminal signal peptide occupies residues M1–A19. Residues A20–L27 constitute a propeptide that is removed on maturation. 7 cysteine pairs are disulfide-bonded: C38–C98, C54–C145, C56–C72, C71–C126, C78–C119, C87–C112, and C105–C117. Ca(2+) is bound by residues Y55, G57, and G59. The active site involves H75. D76 serves as a coordination point for Ca(2+). D120 is a catalytic residue.

Belongs to the phospholipase A2 family. Group I subfamily. D49 sub-subfamily. The cofactor is Ca(2+). Expressed by the venom gland.

It is found in the secreted. The enzyme catalyses a 1,2-diacyl-sn-glycero-3-phosphocholine + H2O = a 1-acyl-sn-glycero-3-phosphocholine + a fatty acid + H(+). In terms of biological role, snake venom phospholipase A2 (PLA2) that inhibits collagen-induced platelet aggregation. PLA2 catalyzes the calcium-dependent hydrolysis of the 2-acyl groups in 3-sn-phosphoglycerides. This Drysdalia coronoides (White-lipped snake) protein is Phospholipase A2 PS22.